The primary structure comprises 424 residues: Trigger factor (424 aa).

The PPIase FKBP-type domain maps to 163-248 (GDTVVLDFEG…IHEIKAKELP (86 aa)).

It belongs to the FKBP-type PPIase family. Tig subfamily.

The protein resides in the cytoplasm. It catalyses the reaction [protein]-peptidylproline (omega=180) = [protein]-peptidylproline (omega=0). Involved in protein export. Acts as a chaperone by maintaining the newly synthesized protein in an open conformation. Functions as a peptidyl-prolyl cis-trans isomerase. This Bacillus pumilus (strain SAFR-032) protein is Trigger factor.